A 448-amino-acid chain; its full sequence is CCA-adding enzyme (448 aa).

Positions 52 and 55 each coordinate ATP. Residues Ser-52 and Lys-55 each contribute to the CTP site. Asp-64, Asp-66, and Asp-118 together coordinate Mg(2+). ATP is bound by residues His-141, Lys-160, and Tyr-169. 3 residues coordinate CTP: His-141, Lys-160, and Tyr-169.

The protein belongs to the tRNA nucleotidyltransferase/poly(A) polymerase family. Archaeal CCA-adding enzyme subfamily. In terms of assembly, homodimer. Mg(2+) is required as a cofactor.

It carries out the reaction a tRNA precursor + 2 CTP + ATP = a tRNA with a 3' CCA end + 3 diphosphate. The enzyme catalyses a tRNA with a 3' CCA end + 2 CTP + ATP = a tRNA with a 3' CCACCA end + 3 diphosphate. Catalyzes the addition and repair of the essential 3'-terminal CCA sequence in tRNAs without using a nucleic acid template. Adds these three nucleotides in the order of C, C, and A to the tRNA nucleotide-73, using CTP and ATP as substrates and producing inorganic pyrophosphate. tRNA 3'-terminal CCA addition is required both for tRNA processing and repair. Also involved in tRNA surveillance by mediating tandem CCA addition to generate a CCACCA at the 3' terminus of unstable tRNAs. While stable tRNAs receive only 3'-terminal CCA, unstable tRNAs are marked with CCACCA and rapidly degraded. The protein is CCA-adding enzyme of Pyrococcus abyssi (strain GE5 / Orsay).